A 72-amino-acid polypeptide reads, in one-letter code: UPF0352 protein swp_2271 (72 aa).

It belongs to the UPF0352 family.

This chain is UPF0352 protein swp_2271, found in Shewanella piezotolerans (strain WP3 / JCM 13877).